The primary structure comprises 609 residues: Arginine--tRNA ligase (609 aa).

Residues 132–142 carry the 'HIGH' region motif; it reads ANPTSSLHVGH.

It belongs to the class-I aminoacyl-tRNA synthetase family. Monomer.

It is found in the cytoplasm. It carries out the reaction tRNA(Arg) + L-arginine + ATP = L-arginyl-tRNA(Arg) + AMP + diphosphate. The protein is Arginine--tRNA ligase of Psychrobacter arcticus (strain DSM 17307 / VKM B-2377 / 273-4).